A 963-amino-acid chain; its full sequence is Reversion-inducing cysteine-rich protein with Kazal motifs (963 aa).

A signal peptide spans 1-28 (MAAAVAAWPWALFCLAAVPPLLSPGAAG). Residues 31–78 (CCYHAKDNLMCRDVCEQILSSKSDSRLKHLLQRAPEYCPESMGEVWGC) form a Knot 1 repeat. The segment at 31-332 (CCYHAKDNLM…NAVEVSMLTC (302 aa)) is 5 X Knot repeats. N80 is a glycosylation site (N-linked (GlcNAc...) asparagine). Knot repeat units lie at residues 98-135 (CCEL…LFSC) and 145-191 (CCSY…LIHC). An N-linked (GlcNAc...) asparagine glycan is attached at N194. Knot repeat units follow at residues 210-257 (CCDR…LWQC) and 286-332 (CCSK…MLTC). N-linked (GlcNAc...) asparagine glycans are attached at residues N291 and N346. Kazal-like domains follow at residues 621–667 (KFTG…SCIS), 692–746 (SFGK…PCQP), and 749–783 (KSVE…HCQA). 6 disulfide bridges follow: C627–C652, C629–C648, C637–C665, C710–C729, C718–C744, and C755–C781. S936 is lipidated: GPI-anchor amidated serine. Positions 937-963 (PSVKVGPVLHCLFISFSFTLLKLMDYI) are excised as a propeptide.

The protein belongs to the RECK family. As to quaternary structure, interacts (via knot repeats) with WNT7A (via disordered linker region); the interaction is direct. Interacts (via knot repeats) with WNT7B (via disordered linker region); the interaction is direct. Interacts with ADGRA2; the interaction is direct. In terms of processing, localizes to the plasma membrane via its GPI-anchor. Released from the plasma membrane following cleavage of the GPI-anchor by GDPD5/GPE2.

It is found in the cell membrane. Functionally, functions together with ADGRA2 to enable brain endothelial cells to selectively respond to Wnt7 signals (WNT7A or WNT7B). Plays a key role in Wnt7-specific responses: required for central nervous system (CNS) angiogenesis and blood-brain barrier regulation. Acts as a Wnt7-specific coactivator of canonical Wnt signaling by decoding Wnt ligands: acts by interacting specifically with the disordered linker region of Wnt7, thereby conferring ligand selectivity for Wnt7. ADGRA2 is then required to deliver RECK-bound Wnt7 to frizzled by assembling a higher-order RECK-ADGRA2-Fzd-LRP5-LRP6 complex. Also acts as a serine protease inhibitor. This chain is Reversion-inducing cysteine-rich protein with Kazal motifs, found in Gallus gallus (Chicken).